Reading from the N-terminus, the 386-residue chain is Acetylornithine aminotransferase (386 aa).

Pyridoxal 5'-phosphate contacts are provided by residues 94 to 95 (GT) and Phe-121. N(2)-acetyl-L-ornithine is bound at residue Arg-124. 206–209 (DEVQ) is a pyridoxal 5'-phosphate binding site. An N6-(pyridoxal phosphate)lysine modification is found at Lys-235. Ser-263 provides a ligand contact to N(2)-acetyl-L-ornithine. Thr-264 provides a ligand contact to pyridoxal 5'-phosphate.

Belongs to the class-III pyridoxal-phosphate-dependent aminotransferase family. ArgD subfamily. As to quaternary structure, homodimer. Pyridoxal 5'-phosphate is required as a cofactor.

It localises to the cytoplasm. It catalyses the reaction N(2)-acetyl-L-ornithine + 2-oxoglutarate = N-acetyl-L-glutamate 5-semialdehyde + L-glutamate. The protein operates within amino-acid biosynthesis; L-arginine biosynthesis; N(2)-acetyl-L-ornithine from L-glutamate: step 4/4. The chain is Acetylornithine aminotransferase from Listeria monocytogenes serovar 1/2a (strain ATCC BAA-679 / EGD-e).